A 201-amino-acid chain; its full sequence is MIKLVLFYFFSGLSLVSASIVISVKNPVFSVVFLILVFFNVVGLLLLLGAEFLSLLFLIVYVGAIAVLFLFVVMILNLKFIELRSSFFYYAFFGSLIMAIFLFEIFIILNSDLTFASSYFLERKRIWVQELYSYTNLQILGNVLYTSYSYLFILSGFVLLVAILGAIILTLYQRSQIRRQDPNVQVVRNFDDTIRFFKFLK.

The next 5 helical transmembrane spans lie at L4–V24, V28–L48, L55–I75, F88–I108, and L151–L171.

Belongs to the complex I subunit 6 family.

It localises to the mitochondrion membrane. The enzyme catalyses a ubiquinone + NADH + 5 H(+)(in) = a ubiquinol + NAD(+) + 4 H(+)(out). Its function is as follows. Core subunit of the mitochondrial membrane respiratory chain NADH dehydrogenase (Complex I) that is believed to belong to the minimal assembly required for catalysis. Complex I functions in the transfer of electrons from NADH to the respiratory chain. The immediate electron acceptor for the enzyme is believed to be ubiquinone. In Cyanidium caldarium (Red alga), this protein is NADH-ubiquinone oxidoreductase chain 6 (ND6).